We begin with the raw amino-acid sequence, 100 residues long: Replication restart protein PriB (100 aa).

In terms of domain architecture, SSB spans 1–100; the sequence is MTNRIELSGV…VLHADKISQI (100 aa).

Belongs to the PriB family. Homodimer. Interacts with PriA and DnaT. Component of the replication restart primosome. Primosome assembly occurs via a 'hand-off' mechanism. PriA binds to replication forks, subsequently PriB then DnaT bind; DnaT then displaces ssDNA to generate the helicase loading substrate.

In terms of biological role, involved in the restart of stalled replication forks, which reloads the replicative helicase on sites other than the origin of replication; the PriA-PriB pathway is the major replication restart pathway. During primosome assembly it facilitates complex formation between PriA and DnaT on DNA; stabilizes PriA on DNA. Stimulates the DNA unwinding activity of PriA helicase. This chain is Replication restart protein PriB, found in Vibrio cholerae serotype O1 (strain ATCC 39315 / El Tor Inaba N16961).